The following is a 393-amino-acid chain: Tryptophan synthase beta chain (393 aa).

An N6-(pyridoxal phosphate)lysine modification is found at K85.

Belongs to the TrpB family. As to quaternary structure, tetramer of two alpha and two beta chains. Pyridoxal 5'-phosphate serves as cofactor.

The enzyme catalyses (1S,2R)-1-C-(indol-3-yl)glycerol 3-phosphate + L-serine = D-glyceraldehyde 3-phosphate + L-tryptophan + H2O. Its pathway is amino-acid biosynthesis; L-tryptophan biosynthesis; L-tryptophan from chorismate: step 5/5. Its function is as follows. The beta subunit is responsible for the synthesis of L-tryptophan from indole and L-serine. The protein is Tryptophan synthase beta chain (trpB) of Helicobacter pylori (strain J99 / ATCC 700824) (Campylobacter pylori J99).